The primary structure comprises 508 residues: Phenylalanine--tRNA ligase alpha subunit (508 aa).

At Ala2 the chain carries N-acetylalanine. Residues Ser193 and Ser301 each carry the phosphoserine modification. Lys311 is subject to N6-acetyllysine. Residues Thr329, Gln372 to Glu374, and Tyr412 each bind L-phenylalanine. Glu414 is a Mg(2+) binding site. Phe438 is an L-phenylalanine binding site.

Belongs to the class-II aminoacyl-tRNA synthetase family. Phe-tRNA synthetase alpha subunit type 2 subfamily. As to quaternary structure, heterotetramer; dimer of two heterodimers formed by FARSA and FARSB. The cofactor is Mg(2+).

The protein resides in the cytoplasm. It catalyses the reaction tRNA(Phe) + L-phenylalanine + ATP = L-phenylalanyl-tRNA(Phe) + AMP + diphosphate + H(+). This is Phenylalanine--tRNA ligase alpha subunit (Farsa) from Rattus norvegicus (Rat).